Here is a 243-residue protein sequence, read N- to C-terminus: Pyridoxine 5'-phosphate synthase (243 aa).

N9 contacts 3-amino-2-oxopropyl phosphate. Residue D11 to H12 coordinates 1-deoxy-D-xylulose 5-phosphate. R20 is a 3-amino-2-oxopropyl phosphate binding site. Residue H45 is the Proton acceptor of the active site. Residues R47 and H52 each contribute to the 1-deoxy-D-xylulose 5-phosphate site. The Proton acceptor role is filled by E72. Residue T102 coordinates 1-deoxy-D-xylulose 5-phosphate. The active-site Proton donor is H193. Residues G194 and G215–H216 contribute to the 3-amino-2-oxopropyl phosphate site.

It belongs to the PNP synthase family. In terms of assembly, homooctamer; tetramer of dimers.

Its subcellular location is the cytoplasm. It carries out the reaction 3-amino-2-oxopropyl phosphate + 1-deoxy-D-xylulose 5-phosphate = pyridoxine 5'-phosphate + phosphate + 2 H2O + H(+). It participates in cofactor biosynthesis; pyridoxine 5'-phosphate biosynthesis; pyridoxine 5'-phosphate from D-erythrose 4-phosphate: step 5/5. Its function is as follows. Catalyzes the complicated ring closure reaction between the two acyclic compounds 1-deoxy-D-xylulose-5-phosphate (DXP) and 3-amino-2-oxopropyl phosphate (1-amino-acetone-3-phosphate or AAP) to form pyridoxine 5'-phosphate (PNP) and inorganic phosphate. The sequence is that of Pyridoxine 5'-phosphate synthase from Yersinia pseudotuberculosis serotype I (strain IP32953).